Reading from the N-terminus, the 394-residue chain is Na(+)/H(+) antiporter NhaA (394 aa).

11 helical membrane passes run 14 to 34 (AGGL…NSAL), 59 to 79 (LLLW…GLEV), 95 to 115 (VFPA…YLLF), 125 to 145 (GWAI…ALLG), 154 to 174 (VFLL…IALF), 179 to 199 (VSLQ…YMNW), 213 to 233 (LVLW…GVIV), 254 to 274 (GLHP…NAGV), 292 to 312 (IATG…WLAV), 328 to 348 (IFAV…IASL), and 363 to 383 (LGIL…LRLV).

Belongs to the NhaA Na(+)/H(+) (TC 2.A.33) antiporter family.

It localises to the cell inner membrane. It catalyses the reaction Na(+)(in) + 2 H(+)(out) = Na(+)(out) + 2 H(+)(in). Na(+)/H(+) antiporter that extrudes sodium in exchange for external protons. The polypeptide is Na(+)/H(+) antiporter NhaA (Yersinia pestis bv. Antiqua (strain Angola)).